A 185-amino-acid polypeptide reads, in one-letter code: Ribosome-recycling factor (185 aa).

The protein belongs to the RRF family.

It localises to the cytoplasm. Its function is as follows. Responsible for the release of ribosomes from messenger RNA at the termination of protein biosynthesis. May increase the efficiency of translation by recycling ribosomes from one round of translation to another. In Pseudomonas fluorescens (strain SBW25), this protein is Ribosome-recycling factor.